The chain runs to 396 residues: Methionine import ATP-binding protein MetN 2 (396 aa).

The region spanning 41–280 (VSFELVGKVF…PRHGATRALL (240 aa)) is the ABC transporter domain. Residue 77 to 84 (GRSGAGKS) participates in ATP binding.

It belongs to the ABC transporter superfamily. Methionine importer (TC 3.A.1.24) family. As to quaternary structure, the complex is composed of two ATP-binding proteins (MetN), two transmembrane proteins (MetI) and a solute-binding protein (MetQ).

Its subcellular location is the cell inner membrane. The catalysed reaction is L-methionine(out) + ATP + H2O = L-methionine(in) + ADP + phosphate + H(+). It carries out the reaction D-methionine(out) + ATP + H2O = D-methionine(in) + ADP + phosphate + H(+). Functionally, part of the ABC transporter complex MetNIQ involved in methionine import. Responsible for energy coupling to the transport system. The chain is Methionine import ATP-binding protein MetN 2 from Burkholderia mallei (strain ATCC 23344).